A 100-amino-acid chain; its full sequence is Toxin Rv0299 (100 aa).

Its function is as follows. Toxic component of a type II toxin-antitoxin (TA) system. Upon expression in M.smegmatis inhibits colony formation. Its toxic effect is neutralized by coexpression with cognate antitoxin Rv0298/MT0312. The sequence is that of Toxin Rv0299 from Mycobacterium tuberculosis (strain ATCC 25618 / H37Rv).